The chain runs to 353 residues: UPF0283 membrane protein YcjF (353 aa).

Basic and acidic residues predominate over residues 1–19; sequence MSEPLKPRIDFAEPLKEEP. The tract at residues 1 to 35 is disordered; it reads MSEPLKPRIDFAEPLKEEPTSAFKAQQTFSEAESR. A run of 3 helical transmembrane segments spans residues 70–90, 100–120, and 213–233; these read MVMG…IQWT, VALG…GSVV, and ESTL…FIAW.

The protein belongs to the UPF0283 family.

It localises to the cell inner membrane. The protein is UPF0283 membrane protein YcjF of Salmonella agona (strain SL483).